A 260-amino-acid polypeptide reads, in one-letter code: Dehydrin ERD10 (260 aa).

Disordered stretches follow at residues 1-187 (MAEE…EEEK), 197-216 (KLPG…TTPL), and 240-260 (KLPG…KVSD). Position 2 is an N-acetylalanine (A2). The segment covering 26-44 (EIKERGMFDFLKKKEEVKP) has biased composition (basic and acidic residues). S61 carries the phosphoserine modification. 5 stretches are compositionally biased toward basic and acidic residues: residues 67–102 (VAKH…DKLH), 130–140 (IVEGDHVKTVE), 148–162 (DRIK…KPGG), 176–187 (SVEDHKPEEEEK), and 197–207 (KLPGHSKKPED). A run of 2 repeats spans residues 184-204 (EEEK…HSKK) and 227-247 (PEEK…YHAK). Positions 184 to 247 (EEEKKGFMDK…KEKLPGYHAK (64 aa)) are 2 X 21 AA repeats, Lys-rich.

This sequence belongs to the plant dehydrin family. In stems, cauline leaves, roots and flowers. Low levels found in maturing seeds. Absent in dry seeds.

The chain is Dehydrin ERD10 (ERD10) from Arabidopsis thaliana (Mouse-ear cress).